The following is a 370-amino-acid chain: Phosphate-binding protein PstS2 (370 aa).

A signal peptide spans 1–22; sequence MKFARSGAAVSLLAAGTLVLTA. A lipid anchor (N-palmitoyl cysteine) is attached at Cys23. Cys23 carries the S-diacylglycerol cysteine lipid modification. Phosphate is bound by residues 54 to 56, Ser84, Asp102, and 191 to 193; these read STA and SGT.

The protein belongs to the PstS family. As to quaternary structure, the complex is composed of two ATP-binding proteins (PstB), two transmembrane proteins (PstC and PstA) and a solute-binding protein (PstS).

Its subcellular location is the cell membrane. The protein resides in the secreted. Functionally, functions in inorganic phosphate uptake, a phosphate-binding protein, although probably not the main uptake protein under phosphate starvation. Part of the ABC transporter complex PstSACB involved in phosphate import. The sequence is that of Phosphate-binding protein PstS2 (pstS2) from Mycobacterium bovis (strain BCG / Pasteur 1173P2).